The sequence spans 451 residues: Methionine aminopeptidase 2-2 (451 aa).

A disordered region spans residues 1–101 (MAAKVADDVA…IDEVFPNDSY (101 aa)). Acidic residues predominate over residues 37–51 (EHEDSDDDNEAEEGA). Over residues 60 to 73 (KKKKKRKPRKKKKA) the composition is skewed to basic residues. His-204 is a substrate binding site. Residues Asp-224, Asp-235, and His-304 each contribute to the a divalent metal cation site. Substrate is bound at residue His-312. A divalent metal cation is bound by residues Glu-337 and Glu-432.

It belongs to the peptidase M24A family. Methionine aminopeptidase eukaryotic type 2 subfamily. It depends on Co(2+) as a cofactor. The cofactor is Zn(2+). Requires Mn(2+) as cofactor. Fe(2+) is required as a cofactor.

It is found in the cytoplasm. The catalysed reaction is Release of N-terminal amino acids, preferentially methionine, from peptides and arylamides.. In terms of biological role, cotranslationally removes the N-terminal methionine from nascent proteins. The N-terminal methionine is often cleaved when the second residue in the primary sequence is small and uncharged (Met-Ala-, Cys, Gly, Pro, Ser, Thr, or Val). This is Methionine aminopeptidase 2-2 from Pyrenophora tritici-repentis (strain Pt-1C-BFP) (Wheat tan spot fungus).